Here is a 93-residue protein sequence, read N- to C-terminus: uncharacterized protein (93 aa).

A run of 2 helical transmembrane segments spans residues 7–27 and 70–90; these read LIFLGIILMFIGFFMITLGMI and ILSVLIAILMIIWMFLFAFGI.

It is found in the cell membrane. This is an uncharacterized protein from Methanocaldococcus jannaschii (strain ATCC 43067 / DSM 2661 / JAL-1 / JCM 10045 / NBRC 100440) (Methanococcus jannaschii).